Consider the following 285-residue polypeptide: Putative pyruvate, phosphate dikinase regulatory protein (285 aa).

165 to 172 (GVSRTSKT) is a binding site for ADP.

This sequence belongs to the pyruvate, phosphate/water dikinase regulatory protein family. PDRP subfamily.

It carries out the reaction N(tele)-phospho-L-histidyl/L-threonyl-[pyruvate, phosphate dikinase] + ADP = N(tele)-phospho-L-histidyl/O-phospho-L-threonyl-[pyruvate, phosphate dikinase] + AMP + H(+). The enzyme catalyses N(tele)-phospho-L-histidyl/O-phospho-L-threonyl-[pyruvate, phosphate dikinase] + phosphate + H(+) = N(tele)-phospho-L-histidyl/L-threonyl-[pyruvate, phosphate dikinase] + diphosphate. Bifunctional serine/threonine kinase and phosphorylase involved in the regulation of the pyruvate, phosphate dikinase (PPDK) by catalyzing its phosphorylation/dephosphorylation. The protein is Putative pyruvate, phosphate dikinase regulatory protein of Lactobacillus delbrueckii subsp. bulgaricus (strain ATCC BAA-365 / Lb-18).